The following is a 145-amino-acid chain: uncharacterized protein (145 aa).

Belongs to the methyltransferase superfamily.

Probable methyltransferase. This is an uncharacterized protein from Schizosaccharomyces pombe (strain 972 / ATCC 24843) (Fission yeast).